The following is a 68-amino-acid chain: Adipokinetic prohormone type 1 (68 aa).

Residues 1-20 (MNKIYFVIVFVACFCLFAEA) form the signal peptide. Gln21 carries the post-translational modification Pyrrolidone carboxylic acid. Gly30 is modified (glycine amide). Positions 34-68 (SGVAPMSCKNEEAVATIFKLIQNEAERFIICQQKS) are excised as a propeptide.

As to expression, expressed in antennal lobe (AL), corpora cardiaca (CC), corpora allata (CA) and gnathal ganglion (GNG) (at protein level). Expression in CC and CA detected in all animals, expression in GNG in some animals and in AL in few animals (at protein level).

The protein resides in the secreted. In terms of biological role, this hormone, released from cells in the corpora cardiaca, causes release of diglycerides from the fat body and stimulation of muscles to use these diglycerides as an energy source during energy-demanding processes. This chain is Adipokinetic prohormone type 1, found in Agrotis ipsilon (Black cutworm moth).